We begin with the raw amino-acid sequence, 565 residues long: Small ribosomal subunit protein bS1 (565 aa).

6 S1 motif domains span residues 30 to 96 (SSVI…LSRD), 114 to 180 (NEKV…VSRR), 201 to 269 (GQVI…LGMK), 286 to 356 (NARF…LGLK), 373 to 443 (GSTV…LGVK), and 454 to 529 (GDVK…VSIK).

Belongs to the bacterial ribosomal protein bS1 family. The initiator methionine may be removed.

In terms of biological role, binds mRNA; thus facilitating recognition of the initiation point. It is needed to translate mRNA with a short Shine-Dalgarno (SD) purine-rich sequence. This Rhodopseudomonas palustris (strain ATCC BAA-98 / CGA009) protein is Small ribosomal subunit protein bS1 (rpsA).